Here is a 100-residue protein sequence, read N- to C-terminus: Small ribosomal subunit protein uS14c (100 aa).

Basic and acidic residues predominate over residues 28–45 (KKEIKKVPSLSEKMEIHG). The segment at 28–59 (KKEIKKVPSLSEKMEIHGKLQSPPRNSAPTRL) is disordered.

Belongs to the universal ribosomal protein uS14 family. Part of the 30S ribosomal subunit.

The protein resides in the plastid. It localises to the chloroplast. Binds 16S rRNA, required for the assembly of 30S particles. This is Small ribosomal subunit protein uS14c from Nandina domestica (Heavenly bamboo).